A 50-amino-acid chain; its full sequence is Large ribosomal subunit protein bL33B (50 aa).

The protein belongs to the bacterial ribosomal protein bL33 family.

This is Large ribosomal subunit protein bL33B from Mycoplasmopsis agalactiae (strain NCTC 10123 / CIP 59.7 / PG2) (Mycoplasma agalactiae).